The primary structure comprises 157 residues: Tuberoinfundibular peptide of 39 residues (157 aa).

Residues 1 to 25 form the signal peptide; sequence MALSLPPRPALLFLVLMSVTLMASA. The propeptide occupies 26–116; it reads FPQPQLRPLQ…DWPSRVGHQQ (91 aa).

Belongs to the parathyroid hormone family.

The protein localises to the secreted. Plays a role as a potent and selective agonist of pth2r resulting in adenyl cyclase activation and intracellular calcium level elevation. The polypeptide is Tuberoinfundibular peptide of 39 residues (Danio rerio (Zebrafish)).